Consider the following 195-residue polypeptide: Large ribosomal subunit protein bL27c (195 aa).

Residues 1–60 (MASMAFTLVGAFKGMSLSSPCHSSSSASFLRADRVSLSVGGGVGMGVPMTMPVRRLTIQM) constitute a chloroplast transit peptide.

Belongs to the bacterial ribosomal protein bL27 family. As to quaternary structure, part of the 50S ribosomal subunit.

The protein resides in the plastid. The protein localises to the chloroplast. This is Large ribosomal subunit protein bL27c (RPL27) from Oryza sativa subsp. japonica (Rice).